Reading from the N-terminus, the 468-residue chain is Probable soluble pyridine nucleotide transhydrogenase (468 aa).

33 to 42 contributes to the FAD binding site; it reads ERGRMLGGVC.

This sequence belongs to the class-I pyridine nucleotide-disulfide oxidoreductase family. Requires FAD as cofactor.

It is found in the cytoplasm. It carries out the reaction NAD(+) + NADPH = NADH + NADP(+). In terms of biological role, conversion of NADPH, generated by peripheral catabolic pathways, to NADH, which can enter the respiratory chain for energy generation. This Mycobacterium bovis (strain ATCC BAA-935 / AF2122/97) protein is Probable soluble pyridine nucleotide transhydrogenase (sthA).